Consider the following 361-residue polypeptide: Elongator complex protein 4 (361 aa).

Disordered stretches follow at residues 93–124 (QLPGDSDRPNKNENSAGEDNHSSPPSKNPQQE) and 338–361 (DDEQKDTKISNTNPQKQPVKSLDF). Composition is skewed to polar residues over residues 104-121 (NENSAGEDNHSSPPSKNP) and 346-355 (ISNTNPQKQP).

The protein belongs to the ELP4 family. In terms of assembly, component of the elongator complex.

The protein localises to the cytoplasm. Its subcellular location is the nucleus. Its pathway is tRNA modification; 5-methoxycarbonylmethyl-2-thiouridine-tRNA biosynthesis. Functionally, component of the elongator complex, a multiprotein complex which is required for multiple tRNA modifications, including mcm5U (5-methoxycarbonylmethyl uridine), mcm5s2U (5-methoxycarbonylmethyl-2-thiouridine), and ncm5U (5-carbamoylmethyl uridine). The elongator complex catalyzes formation of carboxymethyluridine in the wobble base at position 34 in tRNAs. The protein is Elongator complex protein 4 of Schizosaccharomyces pombe (strain 972 / ATCC 24843) (Fission yeast).